Consider the following 237-residue polypeptide: tRNA (guanine-N(7)-)-methyltransferase (237 aa).

Positions 67, 92, 119, and 141 each coordinate S-adenosyl-L-methionine. Asp141 is a catalytic residue. Residues Lys145, Asp177, and 214–217 contribute to the substrate site; that span reads TRYE.

Belongs to the class I-like SAM-binding methyltransferase superfamily. TrmB family.

It carries out the reaction guanosine(46) in tRNA + S-adenosyl-L-methionine = N(7)-methylguanosine(46) in tRNA + S-adenosyl-L-homocysteine. It participates in tRNA modification; N(7)-methylguanine-tRNA biosynthesis. Functionally, catalyzes the formation of N(7)-methylguanine at position 46 (m7G46) in tRNA. The protein is tRNA (guanine-N(7)-)-methyltransferase of Jannaschia sp. (strain CCS1).